Consider the following 337-residue polypeptide: Fructose-1,6-bisphosphatase class 1 (337 aa).

4 residues coordinate Mg(2+): Glu94, Asp116, Leu118, and Asp119. Residues 119-122, Asn210, and Lys276 contribute to the substrate site; that span reads DGSS. Glu282 lines the Mg(2+) pocket.

The protein belongs to the FBPase class 1 family. In terms of assembly, homotetramer. Mg(2+) serves as cofactor.

The protein localises to the cytoplasm. The catalysed reaction is beta-D-fructose 1,6-bisphosphate + H2O = beta-D-fructose 6-phosphate + phosphate. It functions in the pathway carbohydrate biosynthesis; gluconeogenesis. This is Fructose-1,6-bisphosphatase class 1 from Burkholderia orbicola (strain MC0-3).